Reading from the N-terminus, the 190-residue chain is Lysozyme g (190 aa).

The span at 1–10 (MPYGKIEDIK) shows a compositional bias: basic and acidic residues. A disordered region spans residues 1–31 (MPYGKIEDIKTSGASDVTAAQDGLKEGGWKS). Catalysis depends on residues Glu71 and Asp84.

It belongs to the glycosyl hydrolase 23 family.

The catalysed reaction is Hydrolysis of (1-&gt;4)-beta-linkages between N-acetylmuramic acid and N-acetyl-D-glucosamine residues in a peptidoglycan and between N-acetyl-D-glucosamine residues in chitodextrins.. This chain is Lysozyme g, found in Takifugu rubripes (Japanese pufferfish).